A 907-amino-acid polypeptide reads, in one-letter code: METKEEKKERRQGYFARLKKKRQAKQNTETVSANSPGSPVSKTPAEKDDESKVILEQISSSGDNCKFAGEKETVPEKEKRKKKYNQLKDIRRTELKRYYSTDDNQNKTNEKKEKKMVSQKPHGTIEYTAGNQDTINSIALKFNITPNKLVELNKLFTHTIVPGQILFVPETSVARLPSFSPGAPISPSSSDAEYDKLPDADLARKAFKPVERVLSSTSEEDEPVVVKFLKMNCRYFTDGKGVVGGVMIVTPNNIMFDPHKSDPLVIENGCEEYGLICPMEEVVSIALYNDISHMKIKDALPSDIPKDLCPLYRPGEWEDLSSEKDINPFSKFKSLSKEKRQQNGDSPNVPGAKQINPSDKEKSADFEVLQSSESTGSIKSKSLEFYNNITATEHLEKFAADPHVKEPSEEKNVSDIRTKEDSLSGGGDDFIDLEKVPSPMDRGLDRKISLMEGLLADPRELGRTKQQVTKPTTEVQEHFTVDSLEKKDSVEPKADLDLELCEKQDVIPEVNKCVSSPTGKVETALDTKKELEKDKLIEFYLNKDGSGSQSSEDLHKAEIQKGENNKAIGIDLTLSCSKSQADEVHTVKSMELDSCCVGRKAASLESSAAAAEEKDLKESLDSSLVPAVDKTCQETQLDNQSEVRLWLLQKIQVPIEDMLPSKEEKSKTPPMFLCIKVGKPMRKSFVSQSTTVSQQYSKKIKQPEYWFAVPREIITVEEAKRRKSVCSYYGEEDDDDALPVLKHHSALLENMHIEQLARRLPARVQGYPWRLAYSTLEHGTSLKTLYRKSASLDSPVLLVIKDMDNQIFGAYATHPFRFSDHYYGTGETFLYTFSPNFKVFKWSGENTYFINGDMTSLELGGGGGRFGLWLDADLYHGRSNSCSTFNNDILSKKEDFIIQDVEVWTFE.

Residues 1-12 (METKEEKKERRQ) show a composition bias toward basic and acidic residues. Residues 1-29 (METKEEKKERRQGYFARLKKKRQAKQNTE) are a coiled coil. 3 disordered regions span residues 1–51 (METK…DDES), 63–83 (DNCK…RKKK), and 99–121 (YSTD…SQKP). Polar residues predominate over residues 25–41 (KQNTETVSANSPGSPVS). 2 stretches are compositionally biased toward basic and acidic residues: residues 68-78 (AGEKETVPEKE) and 99-116 (YSTD…EKKM). Residues 125 to 168 (IEYTAGNQDTINSIALKFNITPNKLVELNKLFTHTIVPGQILFV) form the LysM domain. Disordered stretches follow at residues 335–373 (LSKE…QSSE) and 401–443 (DPHV…MDRG). A compositionally biased stretch (basic and acidic residues) spans 401–422 (DPHVKEPSEEKNVSDIRTKEDS). The TLDc domain occupies 746–907 (ALLENMHIEQ…IQDVEVWTFE (162 aa)).

It belongs to the OXR1 family.

It is found in the nucleus. Its function is as follows. Enhances the transcriptional activities of several nuclear receptors. This chain is Nuclear receptor coactivator 7 (NCOA7), found in Gallus gallus (Chicken).